Consider the following 218-residue polypeptide: Ribose-5-phosphate isomerase A (218 aa).

Substrate-binding positions include 28-31 (TGST), 81-84 (DGAD), and 94-97 (KGGG). The Proton acceptor role is filled by E103. K121 provides a ligand contact to substrate.

It belongs to the ribose 5-phosphate isomerase family. In terms of assembly, homodimer.

The enzyme catalyses aldehydo-D-ribose 5-phosphate = D-ribulose 5-phosphate. It participates in carbohydrate degradation; pentose phosphate pathway; D-ribose 5-phosphate from D-ribulose 5-phosphate (non-oxidative stage): step 1/1. Functionally, catalyzes the reversible conversion of ribose-5-phosphate to ribulose 5-phosphate. The sequence is that of Ribose-5-phosphate isomerase A from Aliivibrio salmonicida (strain LFI1238) (Vibrio salmonicida (strain LFI1238)).